Consider the following 157-residue polypeptide: Peptide methionine sulfoxide reductase MsrA (157 aa).

Cys13 is a catalytic residue.

The protein belongs to the MsrA Met sulfoxide reductase family.

The enzyme catalyses L-methionyl-[protein] + [thioredoxin]-disulfide + H2O = L-methionyl-(S)-S-oxide-[protein] + [thioredoxin]-dithiol. It carries out the reaction [thioredoxin]-disulfide + L-methionine + H2O = L-methionine (S)-S-oxide + [thioredoxin]-dithiol. In terms of biological role, has an important function as a repair enzyme for proteins that have been inactivated by oxidation. Catalyzes the reversible oxidation-reduction of methionine sulfoxide in proteins to methionine. The sequence is that of Peptide methionine sulfoxide reductase MsrA from Methanococcus maripaludis (strain C6 / ATCC BAA-1332).